The chain runs to 61 residues: Small ribosomal subunit protein uS14 (61 aa).

Zn(2+)-binding residues include C24, C27, C40, and C43.

The protein belongs to the universal ribosomal protein uS14 family. Zinc-binding uS14 subfamily. In terms of assembly, part of the 30S ribosomal subunit. Contacts proteins S3 and S10. It depends on Zn(2+) as a cofactor.

Its function is as follows. Binds 16S rRNA, required for the assembly of 30S particles and may also be responsible for determining the conformation of the 16S rRNA at the A site. The sequence is that of Small ribosomal subunit protein uS14 from Campylobacter fetus subsp. fetus (strain 82-40).